The primary structure comprises 355 residues: Tabersonine 16-O-methyltransferase (355 aa).

S-adenosyl-L-methionine is bound by residues 198–201 (IGGG), Asp-222, 222–223 (DL), 242–243 (DM), and Lys-256. The Proton acceptor role is filled by His-260.

The protein belongs to the class I-like SAM-binding methyltransferase superfamily. Cation-independent O-methyltransferase family. COMT subfamily. Homodimer. As to expression, expressed in leaves and flowers. Detected in stems and roots. In leaves, expressed in epidermal cells.

The protein resides in the cytoplasm. The catalysed reaction is 16-hydroxytabersonine + S-adenosyl-L-methionine = 16-methoxytabersonine + S-adenosyl-L-homocysteine + H(+). The protein operates within alkaloid biosynthesis; vindoline biosynthesis. Functionally, 16-O-methyltransferase involved in the biosynthesis of vindoline. Highly specific for 16-hydroxytabersonine. No activity with tabersonine, 3-hydroxytyramine, 4-hydroxytyramine, 5-hydroxytryptamine (5HT), 2,3-dihydro-3-hydroxytabersonine, lochnericine, hoerhammericine, 16-hydroxy-2,3-dihydro-3-hydroxytabersonine, 16-hydroxylochnericine, 16-hydroxyhoerhammericine, quercetin, kaempferol and caffeic acid as substrates. In Catharanthus roseus (Madagascar periwinkle), this protein is Tabersonine 16-O-methyltransferase.